The following is a 235-amino-acid chain: Protein GrpE (235 aa).

Basic and acidic residues-rich tracts occupy residues 1–16 (MENKNQKHNNEFHEKN) and 24–35 (NNVKKENLHEDQ). The disordered stretch occupies residues 1–51 (MENKNQKHNNEFHEKNQQSQKDNNNVKKENLHEDQSDLNDANFDDGGKKNK).

The protein belongs to the GrpE family. In terms of assembly, homodimer.

The protein resides in the cytoplasm. Participates actively in the response to hyperosmotic and heat shock by preventing the aggregation of stress-denatured proteins, in association with DnaK and GrpE. It is the nucleotide exchange factor for DnaK and may function as a thermosensor. Unfolded proteins bind initially to DnaJ; upon interaction with the DnaJ-bound protein, DnaK hydrolyzes its bound ATP, resulting in the formation of a stable complex. GrpE releases ADP from DnaK; ATP binding to DnaK triggers the release of the substrate protein, thus completing the reaction cycle. Several rounds of ATP-dependent interactions between DnaJ, DnaK and GrpE are required for fully efficient folding. This chain is Protein GrpE, found in Malacoplasma penetrans (strain HF-2) (Mycoplasma penetrans).